We begin with the raw amino-acid sequence, 315 residues long: Kinetochore protein SPC25 homolog (315 aa).

Residue methionine 1 is modified to N-acetylmethionine. A coiled-coil region spans residues 57 to 91 (TAQSQVELMNLKADLREAEDELVKVLAVKTRKEAR). The interval 261-315 (APAISFSTDTNMSTPENKRSKVQVNRRQKRGSESPLLAPVSTSATRRSSRFKGKK) is disordered. Positions 266-275 (FSTDTNMSTP) are enriched in polar residues. A compositionally biased stretch (basic residues) spans 280–289 (SKVQVNRRQK).

The protein belongs to the SPC25 family. Component of the NDC80 complex, which consists of NDC80, NUF2, SPC24 and SPC25.

It localises to the chromosome. The protein localises to the centromere. Functionally, acts as a component of the essential kinetochore-associated NDC80 complex, which is required for chromosome segregation and spindle checkpoint activity to ensure proper cell division. The chain is Kinetochore protein SPC25 homolog from Arabidopsis thaliana (Mouse-ear cress).